Here is a 546-residue protein sequence, read N- to C-terminus: CTP synthase (546 aa).

The amidoligase domain stretch occupies residues 1 to 267; it reads MTKFIFVTGG…AEQVLDILQL (267 aa). Serine 13 contributes to the CTP binding site. Residue serine 13 coordinates UTP. 14-19 contacts ATP; that stretch reads SIGKGI. L-glutamine is bound at residue tyrosine 54. Aspartate 71 contributes to the ATP binding site. Mg(2+)-binding residues include aspartate 71 and glutamate 141. CTP contacts are provided by residues 148–150, 188–193, and lysine 224; these read DIE and KTKPTQ. UTP contacts are provided by residues 188 to 193 and lysine 224; that span reads KTKPTQ. A Glutamine amidotransferase type-1 domain is found at 292 to 534; sequence EVAIVGKYVR…IKAALGSDLT (243 aa). Glycine 354 is a binding site for L-glutamine. Cysteine 381 (nucleophile; for glutamine hydrolysis) is an active-site residue. L-glutamine-binding positions include 382-385, glutamate 405, and arginine 462; that span reads LGMQ. Active-site residues include histidine 507 and glutamate 509.

The protein belongs to the CTP synthase family. In terms of assembly, homotetramer.

It catalyses the reaction UTP + L-glutamine + ATP + H2O = CTP + L-glutamate + ADP + phosphate + 2 H(+). The enzyme catalyses L-glutamine + H2O = L-glutamate + NH4(+). The catalysed reaction is UTP + NH4(+) + ATP = CTP + ADP + phosphate + 2 H(+). The protein operates within pyrimidine metabolism; CTP biosynthesis via de novo pathway; CTP from UDP: step 2/2. Allosterically activated by GTP, when glutamine is the substrate; GTP has no effect on the reaction when ammonia is the substrate. The allosteric effector GTP functions by stabilizing the protein conformation that binds the tetrahedral intermediate(s) formed during glutamine hydrolysis. Inhibited by the product CTP, via allosteric rather than competitive inhibition. Functionally, catalyzes the ATP-dependent amination of UTP to CTP with either L-glutamine or ammonia as the source of nitrogen. Regulates intracellular CTP levels through interactions with the four ribonucleotide triphosphates. This Synechococcus sp. (strain ATCC 27144 / PCC 6301 / SAUG 1402/1) (Anacystis nidulans) protein is CTP synthase.